Here is a 181-residue protein sequence, read N- to C-terminus: NADH-quinone oxidoreductase subunit I (181 aa).

4Fe-4S ferredoxin-type domains are found at residues 52–81 (TRDSSGRERCVACNLCAVACPVGCISLKKG) and 91–120 (KFFRINFSRCIFCGMCEEACPTAAIQLTPD). Positions 61, 64, 67, 71, 100, 103, 106, and 110 each coordinate [4Fe-4S] cluster.

Belongs to the complex I 23 kDa subunit family. NDH-1 is composed of 13 different subunits. Subunits NuoA, H, J, K, L, M, N constitute the membrane sector of the complex. The cofactor is [4Fe-4S] cluster.

It is found in the cell inner membrane. The enzyme catalyses a quinone + NADH + 5 H(+)(in) = a quinol + NAD(+) + 4 H(+)(out). Functionally, NDH-1 shuttles electrons from NADH, via FMN and iron-sulfur (Fe-S) centers, to quinones in the respiratory chain. The immediate electron acceptor for the enzyme in this species is believed to be ubiquinone. Couples the redox reaction to proton translocation (for every two electrons transferred, four hydrogen ions are translocated across the cytoplasmic membrane), and thus conserves the redox energy in a proton gradient. In Blochmanniella pennsylvanica (strain BPEN), this protein is NADH-quinone oxidoreductase subunit I.